Reading from the N-terminus, the 1307-residue chain is Histone-lysine N-methyltransferase SETDB1 (1307 aa).

The stretch at 30–65 forms a coiled coil; that stretch reads VEELGISMEELRQYIDEELEKMDCIQQRKKQLAELE. Phosphoserine is present on residues Ser-112 and Ser-117. Thr-120 is subject to Phosphothreonine. Residues 127 to 148 are disordered; it reads DEDDDVLSIDSGDAGSRTPKDQ. Residue Lys-182 forms a Glycyl lysine isopeptide (Lys-Gly) (interchain with G-Cter in SUMO2); alternate linkage. A Glycyl lysine isopeptide (Lys-Gly) (interchain with G-Cter in ubiquitin); alternate cross-link involves residue Lys-182. 2 consecutive Tudor domains span residues 257 to 320 and 347 to 403; these read KLFV…LKKT and LLKS…SMKT. 3 disordered regions span residues 404–424, 444–512, and 531–570; these read SSAS…PNMG, IQFK…TLSE, and SVTS…AFHG. The span at 454-467 shows a compositional bias: pro residues; it reads PIAPPAPLPIPPLS. Over residues 476-494 the composition is skewed to polar residues; sequence ESQLAQSRKQVAKKSTSFR. Residues 495–512 show a composition bias toward low complexity; sequence PGSVGSGHSSPTSSTLSE. Residues 539–565 are compositionally biased toward pro residues; that stretch reads AAPPVPPVPPGPPTPPGPPAPPGPLAP. Residues 611–682 form the MBD domain; sequence YRGKNPLLVP…EMFCLDPYVL (72 aa). Residues 744 to 817 enclose the Pre-SET domain; the sequence is VGCDCKDGCR…MCTNRLVQHG (74 aa). Zn(2+) contacts are provided by Cys-746, Cys-748, Cys-752, Cys-758, Cys-760, Cys-798, Cys-802, Cys-804, and Cys-809. An SET domain is found at 820–1282; it reads VRLQLFKTQN…AGTELTWDYN (463 aa). Residues 830-832, Asp-868, and Tyr-870 each bind S-adenosyl-L-methionine; that span reads KGW. Residue Lys-884 forms a Glycyl lysine isopeptide (Lys-Gly) (interchain with G-Cter in ubiquitin) linkage. A disordered region spans residues 885-1174; the sequence is EGYESDVPTS…KNLSGPTKRQ (290 aa). Over residues 913–924 the composition is skewed to acidic residues; the sequence is EDPEESNDDSSD. Basic and acidic residues predominate over residues 950–966; the sequence is GQKENELSEMTSKDSRP. At Ser-1042 the chain carries Phosphoserine. The span at 1048–1066 shows a compositional bias: basic and acidic residues; it reads FKDEGDNKQPKKEDPENRN. Lys-1049 is covalently cross-linked (Glycyl lysine isopeptide (Lys-Gly) (interchain with G-Cter in SUMO2); alternate). Residue Lys-1049 forms a Glycyl lysine isopeptide (Lys-Gly) (interchain with G-Cter in SUMO1); alternate linkage. Residues Lys-1055 and Lys-1085 each participate in a glycyl lysine isopeptide (Lys-Gly) (interchain with G-Cter in SUMO2) cross-link. The span at 1097 to 1112 shows a compositional bias: polar residues; sequence SVLQSQRVVTSTQSNP. The span at 1116–1131 shows a compositional bias: low complexity; sequence LTLSSSTESEGESGTS. The span at 1137–1156 shows a compositional bias: polar residues; the sequence is GHTSATAVDSDDIQTISSGS. Lys-1165 participates in a covalent cross-link: Glycyl lysine isopeptide (Lys-Gly) (interchain with G-Cter in SUMO2). N6,N6,N6-trimethyllysine; alternate occurs at positions 1186 and 1194. Residues Lys-1186 and Lys-1194 each carry the N6,N6-dimethyllysine; alternate modification. Residues Arg-1236 and 1239–1240 each bind S-adenosyl-L-methionine; that span reads NH. Cys-1242, Cys-1295, Cys-1297, and Cys-1302 together coordinate Zn(2+). Residues 1291 to 1307 form the Post-SET domain; sequence KELLCCCGAIECRGRLL.

This sequence belongs to the class V-like SAM-binding methyltransferase superfamily. Histone-lysine methyltransferase family. Suvar3-9 subfamily. As to quaternary structure, part of a complex containing at least CDYL, REST, WIZ, SETDB1, EHMT1 and EHMT2. Forms a complex with ATRX, TRIM28 and ZNF274. Probably part of a corepressor complex containing ZNF304, TRIM28, SETDB1 and DNMT1. Interacts with TRIM28/TIF1B. Interacts with ATF7IP and ATF7IP2; the interaction with ATF7IP is required to stimulate histone methyltransferase activity and facilitate the conversion of dimethylated to trimethylated H3 'Lys-9'. Interacts with MBD1; interaction is abolished when MBD1 is sumoylated. Interacts with CBX1 and CBX5. Interacts with DNMT3A and DNMT3B. Interacts with SUMO2. Interacts with MPHOSPH8. Interacts with ERG. Interacts with HDAC1, HDAC2, SIN3A, SIN3B. Interacts with ATRX. Interacts with RESF1. Interacts with ZNF638. Interacts with TASOR. Interacts with ZNF263; recruited to the SIX3 promoter along with other proteins involved in chromatin modification and transcriptional corepression where it contributes to transcriptional repression. Interacts with PHF13; the interaction probably enhances SETDB1 chromatin-associated levels and activity. Interacts with VRK1. In terms of processing, degraded by the proteasome, shielded by interaction with ATF7IP. Monoubiquitinated at Lys-884 by E2 enzymes UBE2E family. The conjugated-Ub is protected from deubiquitination through the SET domain. Monoubiquitination at Lys-884 is required for catalytic activity and H3K9 methylation and endogenous retrovirus silencing. As to expression, ubiquitously expressed. Strong expression in liver and testis. Expressed in the brain, lungs, kidneys, uterus and seminal vesicles.

The protein resides in the nucleus. The protein localises to the chromosome. The enzyme catalyses N(6),N(6)-dimethyl-L-lysyl(9)-[histone H3] + S-adenosyl-L-methionine = N(6),N(6),N(6)-trimethyl-L-lysyl(9)-[histone H3] + S-adenosyl-L-homocysteine + H(+). Functionally, histone methyltransferase that specifically trimethylates 'Lys-9' of histone H3. H3 'Lys-9' trimethylation represents a specific tag for epigenetic transcriptional repression by recruiting HP1 (CBX1, CBX3 and/or CBX5) proteins to methylated histones. Mainly functions in euchromatin regions, thereby playing a central role in the silencing of euchromatic genes. H3 'Lys-9' trimethylation is coordinated with DNA methylation. Probably forms a complex with MBD1 and ATF7IP that represses transcription and couples DNA methylation and histone 'Lys-9' trimethylation. Its activity is dependent on MBD1 and is heritably maintained through DNA replication by being recruited by CAF-1. SETDB1 is targeted to histone H3 by TRIM28/TIF1B, a factor recruited by KRAB zinc-finger proteins. Probably forms a corepressor complex required for activated KRAS-mediated promoter hypermethylation and transcriptional silencing of tumor suppressor genes (TSGs) or other tumor-related genes in colorectal cancer (CRC) cells. Required to maintain a transcriptionally repressive state of genes in undifferentiated embryonic stem cells (ESCs). In ESCs, in collaboration with TRIM28, is also required for H3K9me3 and silencing of endogenous and introduced retroviruses in a DNA-methylation independent-pathway. Associates at promoter regions of tumor suppressor genes (TSGs) leading to their gene silencing. The SETDB1-TRIM28-ZNF274 complex may play a role in recruiting ATRX to the 3'-exons of zinc-finger coding genes with atypical chromatin signatures to establish or maintain/protect H3K9me3 at these transcriptionally active regions. The sequence is that of Histone-lysine N-methyltransferase SETDB1 from Mus musculus (Mouse).